Reading from the N-terminus, the 498-residue chain is ATP synthase subunit beta, chloroplastic (498 aa).

Position 6 is a phosphothreonine (threonine 6). Residue serine 13 is modified to Phosphoserine. 172 to 179 (GGAGVGKT) serves as a coordination point for ATP.

It belongs to the ATPase alpha/beta chains family. F-type ATPases have 2 components, CF(1) - the catalytic core - and CF(0) - the membrane proton channel. CF(1) has five subunits: alpha(3), beta(3), gamma(1), delta(1), epsilon(1). CF(0) has four main subunits: a(1), b(1), b'(1) and c(9-12).

It localises to the plastid. The protein localises to the chloroplast thylakoid membrane. The enzyme catalyses ATP + H2O + 4 H(+)(in) = ADP + phosphate + 5 H(+)(out). Its function is as follows. Produces ATP from ADP in the presence of a proton gradient across the membrane. The catalytic sites are hosted primarily by the beta subunits. This chain is ATP synthase subunit beta, chloroplastic, found in Arabis hirsuta (Hairy rock-cress).